A 209-amino-acid polypeptide reads, in one-letter code: Ribonuclease HII (209 aa).

An RNase H type-2 domain is found at 20 to 209 (QLEIGIDEVG…KSFLTKLNLI (190 aa)). A divalent metal cation contacts are provided by Asp26, Glu27, and Asp122.

The protein belongs to the RNase HII family. The cofactor is Mn(2+). It depends on Mg(2+) as a cofactor.

It is found in the cytoplasm. It carries out the reaction Endonucleolytic cleavage to 5'-phosphomonoester.. Its function is as follows. Endonuclease that specifically degrades the RNA of RNA-DNA hybrids. This is Ribonuclease HII from Prochlorococcus marinus (strain MIT 9515).